A 112-amino-acid polypeptide reads, in one-letter code: B3 domain-containing protein At1g43171 (112 aa).

A DNA-binding region (TF-B3) is located at residues 19-112 (DIVGNVALPK…FENKFIVLNF (94 aa)).

Its subcellular location is the nucleus. This is B3 domain-containing protein At1g43171 from Arabidopsis thaliana (Mouse-ear cress).